The chain runs to 307 residues: Coproporphyrin III ferrochelatase (307 aa).

Residues Tyr-12, Arg-29, 45–46, Ser-53, and Tyr-124 each bind Fe-coproporphyrin III; that span reads RY. The Fe(2+) site is built by His-181 and Glu-263.

This sequence belongs to the ferrochelatase family.

Its subcellular location is the cytoplasm. The catalysed reaction is Fe-coproporphyrin III + 2 H(+) = coproporphyrin III + Fe(2+). Its pathway is porphyrin-containing compound metabolism; protoheme biosynthesis. In terms of biological role, involved in coproporphyrin-dependent heme b biosynthesis. Catalyzes the insertion of ferrous iron into coproporphyrin III to form Fe-coproporphyrin III. This is Coproporphyrin III ferrochelatase from Staphylococcus epidermidis (strain ATCC 12228 / FDA PCI 1200).